We begin with the raw amino-acid sequence, 396 residues long: Pinosylvin synthase 1 (396 aa).

60–63 (KFKR) is a binding site for substrate. Residue Cys-170 is part of the active site. Substrate contacts are provided by residues Leu-273 and 311 to 313 (GGH).

It belongs to the thiolase-like superfamily. Chalcone/stilbene synthases family. In terms of assembly, homodimer.

The protein resides in the cytoplasm. It carries out the reaction (E)-cinnamoyl-CoA + 3 malonyl-CoA + 3 H(+) = (E)-pinosylvin + 4 CO2 + 4 CoA. The catalysed reaction is 3-phenylpropanoyl-CoA + 3 malonyl-CoA + 3 H(+) = dihydropinosylvin + 4 CO2 + 4 CoA. The protein operates within phytoalexin biosynthesis; pinosylvin biosynthesis. In terms of biological role, catalyzes the production of pinosylvin from cinnamoyl-CoA and malonyl-CoA, and dihydropinosylvin from dihydrocinnamoyl-CoA. In Pinus strobus (Eastern white pine), this protein is Pinosylvin synthase 1.